Reading from the N-terminus, the 313-residue chain is Protein FixB (313 aa).

255–283 contributes to the FAD binding site; the sequence is LYLAVGISGQIQHMVGANASQTIFAINKD.

Belongs to the ETF alpha-subunit/FixB family. In terms of assembly, heterodimer of FixA and FixB.

It participates in amine and polyamine metabolism; carnitine metabolism. Required for anaerobic carnitine reduction. May bring reductant to CaiA. The protein is Protein FixB of Escherichia coli O127:H6 (strain E2348/69 / EPEC).